Consider the following 97-residue polypeptide: Large ribosomal subunit protein uL23 (97 aa).

Belongs to the universal ribosomal protein uL23 family. Part of the 50S ribosomal subunit. Contacts protein L29, and trigger factor when it is bound to the ribosome.

Its function is as follows. One of the early assembly proteins it binds 23S rRNA. One of the proteins that surrounds the polypeptide exit tunnel on the outside of the ribosome. Forms the main docking site for trigger factor binding to the ribosome. The sequence is that of Large ribosomal subunit protein uL23 from Sulfurihydrogenibium sp. (strain YO3AOP1).